The primary structure comprises 469 residues: Aspartyl/glutamyl-tRNA(Asn/Gln) amidotransferase subunit B (469 aa).

It belongs to the GatB/GatE family. GatB subfamily. Heterotrimer of A, B and C subunits.

The catalysed reaction is L-glutamyl-tRNA(Gln) + L-glutamine + ATP + H2O = L-glutaminyl-tRNA(Gln) + L-glutamate + ADP + phosphate + H(+). It carries out the reaction L-aspartyl-tRNA(Asn) + L-glutamine + ATP + H2O = L-asparaginyl-tRNA(Asn) + L-glutamate + ADP + phosphate + 2 H(+). Allows the formation of correctly charged Asn-tRNA(Asn) or Gln-tRNA(Gln) through the transamidation of misacylated Asp-tRNA(Asn) or Glu-tRNA(Gln) in organisms which lack either or both of asparaginyl-tRNA or glutaminyl-tRNA synthetases. The reaction takes place in the presence of glutamine and ATP through an activated phospho-Asp-tRNA(Asn) or phospho-Glu-tRNA(Gln). The chain is Aspartyl/glutamyl-tRNA(Asn/Gln) amidotransferase subunit B from Methanococcus vannielii (strain ATCC 35089 / DSM 1224 / JCM 13029 / OCM 148 / SB).